The following is a 221-amino-acid chain: Translation initiation factor 6 (221 aa).

It belongs to the eIF-6 family.

Binds to the 50S ribosomal subunit and prevents its association with the 30S ribosomal subunit to form the 70S initiation complex. The chain is Translation initiation factor 6 from Methanocella arvoryzae (strain DSM 22066 / NBRC 105507 / MRE50).